Here is a 66-residue protein sequence, read N- to C-terminus: MPKMKTKSSAKKRFKVTATGKVMAGQAGKRHGMIKRHKKFIRDARGTTTLSAPDAKIVKGFMPYDR.

It belongs to the bacterial ribosomal protein bL35 family.

In Ruegeria sp. (strain TM1040) (Silicibacter sp.), this protein is Large ribosomal subunit protein bL35.